We begin with the raw amino-acid sequence, 147 residues long: Hemoglobin subunit beta (147 aa).

Residue Val-2 is modified to N-acetylvaline. The Globin domain maps to 3 to 147 (HMSAEEKGIV…VAAALAHKYH (145 aa)). Thr-13 is modified (phosphothreonine). A Phosphoserine modification is found at Ser-45. Position 60 is an N6-acetyllysine (Lys-60). Residue His-64 participates in heme b binding. At Lys-83 the chain carries N6-acetyllysine. His-93 is a binding site for heme b. At Cys-94 the chain carries S-nitrosocysteine. Lys-145 carries the post-translational modification N6-acetyllysine.

Belongs to the globin family. In terms of assembly, heterotetramer of two alpha chains and two beta chains. In terms of tissue distribution, red blood cells.

Functionally, involved in oxygen transport from the lung to the various peripheral tissues. The protein is Hemoglobin subunit beta (HBB) of Scalopus aquaticus (Eastern mole).